A 184-amino-acid polypeptide reads, in one-letter code: Photosystem I assembly protein Ycf4 (184 aa).

Transmembrane regions (helical) follow at residues 22–42 and 57–77; these read FCWA…GTSS and ILFF…LFIS.

This sequence belongs to the Ycf4 family.

It localises to the plastid. It is found in the chloroplast thylakoid membrane. Functionally, seems to be required for the assembly of the photosystem I complex. This Liriodendron tulipifera (Tuliptree) protein is Photosystem I assembly protein Ycf4.